The primary structure comprises 396 residues: Putative nickel insertion protein (396 aa).

It belongs to the LarC family.

This is Putative nickel insertion protein from Methanococcoides burtonii (strain DSM 6242 / NBRC 107633 / OCM 468 / ACE-M).